A 193-amino-acid chain; its full sequence is Peptidyl-tRNA hydrolase (193 aa).

Tyr-16 contacts tRNA. Catalysis depends on His-21, which acts as the Proton acceptor. TRNA contacts are provided by Phe-67, Asn-69, and Asn-115.

Belongs to the PTH family. In terms of assembly, monomer.

Its subcellular location is the cytoplasm. It carries out the reaction an N-acyl-L-alpha-aminoacyl-tRNA + H2O = an N-acyl-L-amino acid + a tRNA + H(+). Its function is as follows. Hydrolyzes ribosome-free peptidyl-tRNAs (with 1 or more amino acids incorporated), which drop off the ribosome during protein synthesis, or as a result of ribosome stalling. Functionally, catalyzes the release of premature peptidyl moieties from peptidyl-tRNA molecules trapped in stalled 50S ribosomal subunits, and thus maintains levels of free tRNAs and 50S ribosomes. In Baumannia cicadellinicola subsp. Homalodisca coagulata, this protein is Peptidyl-tRNA hydrolase.